Here is a 305-residue protein sequence, read N- to C-terminus: Oxygen-dependent coproporphyrinogen-III oxidase (305 aa).

Substrate is bound at residue S97. A divalent metal cation-binding residues include H101 and H111. The active-site Proton donor is the H111. Residue 113-115 (NVR) participates in substrate binding. Residues H150 and H180 each contribute to the a divalent metal cation site. The tract at residues 245-280 (YVEFNLVWDRGTHFGLQSGGRTESILLSMPPLASWA) is important for dimerization. Residue 263–265 (GGR) participates in substrate binding.

This sequence belongs to the aerobic coproporphyrinogen-III oxidase family. As to quaternary structure, homodimer. The cofactor is a divalent metal cation.

Its subcellular location is the cytoplasm. It carries out the reaction coproporphyrinogen III + O2 + 2 H(+) = protoporphyrinogen IX + 2 CO2 + 2 H2O. It functions in the pathway porphyrin-containing compound metabolism; protoporphyrin-IX biosynthesis; protoporphyrinogen-IX from coproporphyrinogen-III (O2 route): step 1/1. In terms of biological role, involved in the heme biosynthesis. Catalyzes the aerobic oxidative decarboxylation of propionate groups of rings A and B of coproporphyrinogen-III to yield the vinyl groups in protoporphyrinogen-IX. This Variovorax paradoxus (strain S110) protein is Oxygen-dependent coproporphyrinogen-III oxidase.